The chain runs to 259 residues: UPF0246 protein NGO_0461 (259 aa).

This sequence belongs to the UPF0246 family.

The protein is UPF0246 protein NGO_0461 of Neisseria gonorrhoeae (strain ATCC 700825 / FA 1090).